Consider the following 475-residue polypeptide: Ribulose bisphosphate carboxylase large chain (475 aa).

Positions M1–S2 are excised as a propeptide. P3 is modified (N-acetylproline). The residue at position 14 (K14) is an N6,N6,N6-trimethyllysine. Positions 123 and 173 each coordinate substrate. The Proton acceptor role is filled by K175. K177 provides a ligand contact to substrate. Mg(2+) is bound by residues K201, D203, and E204. K201 carries the post-translational modification N6-carboxylysine. Catalysis depends on H294, which acts as the Proton acceptor. Substrate contacts are provided by R295, H327, and S379.

The protein belongs to the RuBisCO large chain family. Type I subfamily. As to quaternary structure, heterohexadecamer of 8 large chains and 8 small chains; disulfide-linked. The disulfide link is formed within the large subunit homodimers. The cofactor is Mg(2+). In terms of processing, the disulfide bond which can form in the large chain dimeric partners within the hexadecamer appears to be associated with oxidative stress and protein turnover.

It is found in the plastid. The protein resides in the chloroplast. The catalysed reaction is 2 (2R)-3-phosphoglycerate + 2 H(+) = D-ribulose 1,5-bisphosphate + CO2 + H2O. It carries out the reaction D-ribulose 1,5-bisphosphate + O2 = 2-phosphoglycolate + (2R)-3-phosphoglycerate + 2 H(+). Functionally, ruBisCO catalyzes two reactions: the carboxylation of D-ribulose 1,5-bisphosphate, the primary event in carbon dioxide fixation, as well as the oxidative fragmentation of the pentose substrate in the photorespiration process. Both reactions occur simultaneously and in competition at the same active site. The chain is Ribulose bisphosphate carboxylase large chain from Viscum album (European mistletoe).